Reading from the N-terminus, the 104-residue chain is MNQQRLTQVILAPIVSEKSNVLAEKRNQMTFKVLANATKPEIKAAVELLFGVQVADVTTVTIKGKVKRFGRTLGRRSDVKKAYVSLAAGQELDLEAAAAAADKE.

This sequence belongs to the universal ribosomal protein uL23 family. In terms of assembly, part of the 50S ribosomal subunit. Contacts protein L29, and trigger factor when it is bound to the ribosome.

Functionally, one of the early assembly proteins it binds 23S rRNA. One of the proteins that surrounds the polypeptide exit tunnel on the outside of the ribosome. Forms the main docking site for trigger factor binding to the ribosome. The chain is Large ribosomal subunit protein uL23 from Neisseria meningitidis serogroup B (strain ATCC BAA-335 / MC58).